Here is a 362-residue protein sequence, read N- to C-terminus: Putative protein ARB2BP (362 aa).

Residues 229-245 (IAFIVHGYGGLVFMDLL) traverse the membrane as a helical segment.

It belongs to the ARB2 family.

It localises to the membrane. This is Putative protein ARB2BP from Homo sapiens (Human).